The sequence spans 172 residues: Small ribosomal subunit protein uS13c (172 aa).

The transit peptide at 1-47 directs the protein to the chloroplast; it reads MAHTLATPVAPSVSLICNTKLSVSLSSSSLAFRPVNPKNGGGLSIKC.

As to quaternary structure, component of the chloroplast small ribosomal subunit (SSU). Mature 70S chloroplast ribosomes of higher plants consist of a small (30S) and a large (50S) subunit. The 30S small subunit contains 1 molecule of ribosomal RNA (16S rRNA) and 24 different proteins. The 50S large subunit contains 3 rRNA molecules (23S, 5S and 4.5S rRNA) and 33 different proteins. uS13c interacts with translation factor pY (PSRP1).

It is found in the plastid. The protein localises to the chloroplast. Functionally, component of the chloroplast ribosome (chloro-ribosome), a dedicated translation machinery responsible for the synthesis of chloroplast genome-encoded proteins, including proteins of the transcription and translation machinery and components of the photosynthetic apparatus. The chain is Small ribosomal subunit protein uS13c (RPS13) from Spinacia oleracea (Spinach).